Here is a 228-residue protein sequence, read N- to C-terminus: Urease accessory protein UreF (228 aa).

This sequence belongs to the UreF family. UreD, UreF and UreG form a complex that acts as a GTP-hydrolysis-dependent molecular chaperone, activating the urease apoprotein by helping to assemble the nickel containing metallocenter of UreC. The UreE protein probably delivers the nickel.

The protein resides in the cytoplasm. Required for maturation of urease via the functional incorporation of the urease nickel metallocenter. This Prochlorococcus marinus (strain MIT 9312) protein is Urease accessory protein UreF.